The following is a 131-amino-acid chain: Methylglyoxal synthase (131 aa).

An MGS-like domain is found at Met1–Lys131. Residues His8, Lys12, Thr34 to Thr37, and Ser54 to Gly55 each bind substrate. Asp60 functions as the Proton donor/acceptor in the catalytic mechanism. His87 is a substrate binding site.

It belongs to the methylglyoxal synthase family.

The enzyme catalyses dihydroxyacetone phosphate = methylglyoxal + phosphate. In terms of biological role, catalyzes the formation of methylglyoxal from dihydroxyacetone phosphate. This chain is Methylglyoxal synthase, found in Bacillus mycoides (strain KBAB4) (Bacillus weihenstephanensis).